A 172-amino-acid polypeptide reads, in one-letter code: Sec-independent protein translocase protein TatB (172 aa).

A helical membrane pass occupies residues 1–21 (MFDIGWSELLVIGVVALIAIG).

It belongs to the TatB family. In terms of assembly, the Tat system comprises two distinct complexes: a TatABC complex, containing multiple copies of TatA, TatB and TatC subunits, and a separate TatA complex, containing only TatA subunits. Substrates initially bind to the TatABC complex, which probably triggers association of the separate TatA complex to form the active translocon.

It localises to the cell inner membrane. Functionally, part of the twin-arginine translocation (Tat) system that transports large folded proteins containing a characteristic twin-arginine motif in their signal peptide across membranes. Together with TatC, TatB is part of a receptor directly interacting with Tat signal peptides. TatB may form an oligomeric binding site that transiently accommodates folded Tat precursor proteins before their translocation. The polypeptide is Sec-independent protein translocase protein TatB (Rhodopseudomonas palustris (strain BisB18)).